Reading from the N-terminus, the 113-residue chain is UPF0122 protein LSEI_1603 (113 aa).

It belongs to the UPF0122 family.

Functionally, might take part in the signal recognition particle (SRP) pathway. This is inferred from the conservation of its genetic proximity to ftsY/ffh. May be a regulatory protein. The polypeptide is UPF0122 protein LSEI_1603 (Lacticaseibacillus paracasei (strain ATCC 334 / BCRC 17002 / CCUG 31169 / CIP 107868 / KCTC 3260 / NRRL B-441) (Lactobacillus paracasei)).